The sequence spans 417 residues: Serine hydroxymethyltransferase 1 (417 aa).

Residues leucine 121 and 125–127 (GHL) each bind (6S)-5,6,7,8-tetrahydrofolate. N6-(pyridoxal phosphate)lysine is present on lysine 230. 355–357 (SPF) serves as a coordination point for (6S)-5,6,7,8-tetrahydrofolate.

The protein belongs to the SHMT family. As to quaternary structure, homodimer. The cofactor is pyridoxal 5'-phosphate.

The protein localises to the cytoplasm. The enzyme catalyses (6R)-5,10-methylene-5,6,7,8-tetrahydrofolate + glycine + H2O = (6S)-5,6,7,8-tetrahydrofolate + L-serine. It participates in one-carbon metabolism; tetrahydrofolate interconversion. Its pathway is amino-acid biosynthesis; glycine biosynthesis; glycine from L-serine: step 1/1. Functionally, catalyzes the reversible interconversion of serine and glycine with tetrahydrofolate (THF) serving as the one-carbon carrier. This reaction serves as the major source of one-carbon groups required for the biosynthesis of purines, thymidylate, methionine, and other important biomolecules. Also exhibits THF-independent aldolase activity toward beta-hydroxyamino acids, producing glycine and aldehydes, via a retro-aldol mechanism. This is Serine hydroxymethyltransferase 1 from Pseudomonas syringae pv. tomato (strain ATCC BAA-871 / DC3000).